We begin with the raw amino-acid sequence, 449 residues long: MTHSSSNEHEKEDDRRASDDMMDRDDQNAKEEQDVSKDAPPVNPWDPSQFPDGGFKAWSVVAGGFCSLFCSFGWINCIGIFQQYYQSDYLRGYSSSTISWIASLELFILFAGGLVVGRVYDRYGPRYILLFGTFMHVFGLMMASLSTEYYQILLSQGICSPIGISCLFTPAVNCIATWFRKKRGLANGIVAAGSSLGGVIFPIMFDRLIPRVGFPWAMRIGAFLILFLLIIANLTVVSRIPPMPKPITAKQYLAPFQERTYLLTTIAAMIFVLGLFLPINYIQAQAVEFGMDPSLANYLIPILNAASLFGRTVPGFVADKIGPYNVHTFMCFFSSVVAFALWLPAASNAPIIVFAALYGFGSGAFVAILPTLIAQISDIKEIGLRIGMEFGVLSLPALVSNPIGGAFVAHDNGGYRSCQIWTGCITMLGAILFVVARISLGGPSLMKKV.

Residues 1 to 37 (MTHSSSNEHEKEDDRRASDDMMDRDDQNAKEEQDVSK) are compositionally biased toward basic and acidic residues. The interval 1 to 43 (MTHSSSNEHEKEDDRRASDDMMDRDDQNAKEEQDVSKDAPPVN) is disordered. The next 6 membrane-spanning stretches (helical) occupy residues 61–81 (VAGG…IGIF), 97–117 (TISW…LVVG), 127–147 (YILL…SLST), 152–172 (ILLS…TPAV), 185–205 (LANG…PIMF), and 212–232 (VGFP…LIIA). The N-linked (GlcNAc...) asparagine glycan is linked to N233. Transmembrane regions (helical) follow at residues 262–282 (LLTT…INYI), 298–318 (YLIP…GFVA), 326–346 (VHTF…LPAA), 349–369 (APII…VAIL), 390–410 (FGVL…FVAH), and 420–440 (IWTG…RISL).

It belongs to the major facilitator superfamily. Monocarboxylate porter (TC 2.A.1.13) family.

It is found in the cell membrane. The catalysed reaction is erythrostominone(in) = erythrostominone(out). The enzyme catalyses deoxyerythrostominone(in) = deoxyerythrostominone(out). It catalyses the reaction epierythrostominol(in) = epierythrostominol(out). It carries out the reaction deoxyerythrostominol(in) = deoxyerythrostominol(out). MFS-type transporter that mediates the secretion of the 4 major naphthoquinone derivatives produced, erythrostominone (NQ1), deoxyerythrostominone (NQ2), epierythrostominol (NQ4), and deoxyerythrostominol (NQ5), as well as of 3 newly identified naphthoquinone derivatives termed NQ7, NQ8 and NQ9. The sequence is that of MFS-type transporter 1 from Ophiocordyceps sp. (strain BCC 1869) (Entomopathogenic fungus).